The primary structure comprises 129 residues: MAKSLRSKWKRKMRAEKRKKNAPKEASRLKSILKLDGDVLMKDVQEIATVVVPKPKHCQEKMQCEVKDEKDDMKMETDIKRNKKTLLDQHGQYPIWMNQRQRKRLKAKREKRKGKSKAKAVKVAKGLAW.

Positions 1 to 21 (MAKSLRSKWKRKMRAEKRKKN) are enriched in basic residues. A disordered region spans residues 1–27 (MAKSLRSKWKRKMRAEKRKKNAPKEAS). Glycyl lysine isopeptide (Lys-Gly) (interchain with G-Cter in SUMO2) cross-links involve residues lysine 67 and lysine 74. A compositionally biased stretch (basic residues) spans 100-122 (RQRKRLKAKREKRKGKSKAKAVK). The interval 100-129 (RQRKRLKAKREKRKGKSKAKAVKVAKGLAW) is disordered.

Belongs to the learning-associated protein family. In terms of assembly, interacts with CTCF, MYO1C and with the transcriptional machinery, including RNA polymerase II and TBP.

It is found in the nucleus. The protein resides in the nucleolus. It localises to the chromosome. Functionally, in hippocampal neurons, regulates dendritic and spine growth and synaptic transmission. This Homo sapiens (Human) protein is Protein LLP homolog (LLPH).